The sequence spans 919 residues: Glutamate receptor ionotropic, kainate 3 (919 aa).

A signal peptide spans 1-31 (MTAPWRRLRSLVWEYWAGFLVCAFWIPDSRG). Residues 32–563 (MPHVIRIGGI…VFSFLNPLSP (532 aa)) lie on the Extracellular side of the membrane. Asn-70, Asn-76, Asn-278, Asn-381, Asn-415, Asn-426, and Asn-433 each carry an N-linked (GlcNAc...) asparagine glycan. Cys-99 and Cys-350 are oxidised to a cystine. 3 residues coordinate L-glutamate: Pro-518, Thr-520, and Arg-525. N-linked (GlcNAc...) asparagine glycans are attached at residues Asn-548 and Asn-551. Residues 564-584 (DIWMYVLLAYLGVSCVLFVIA) traverse the membrane as a helical segment. The Cytoplasmic segment spans residues 585–636 (RFSPYEWYDAHPCNPGSEVVENNFTLLNSFWFGMGSLMQQGSELMPKALSTR). The chain crosses the membrane as a helical span at residues 637-657 (IIGGIWWFFTLIIISSYTANL). Residues 658–820 (AAFLTVERME…KEASALGIQK (163 aa)) lie on the Extracellular side of the membrane. The L-glutamate site is built by Ala-691, Thr-692, and Glu-739. A glycan (N-linked (GlcNAc...) asparagine) is linked at Asn-752. A helical membrane pass occupies residues 821 to 841 (IGGIFIVLAAGLVLSVLVAVG). The Cytoplasmic portion of the chain corresponds to 842 to 919 (EFIYKLRKTA…CSTSLAPVFP (78 aa)). At Ser-869 the chain carries Phosphoserine. A Glycyl lysine isopeptide (Lys-Gly) (interchain with G-Cter in SUMO1) cross-link involves residue Lys-887.

Belongs to the glutamate-gated ion channel (TC 1.A.10.1) family. GRIK3 subfamily. Homotetramer, and heterotetramer with GRIK4 or GRIK5. Can form functional heteromeric receptors with GRIK2. Interacts with PRKCABP. Interacts with NETO2. In terms of assembly, homomeric GluR7A forms functional kainate receptors which have very low sensitivity to glutamate. Can form functional heteromeric receptors with GRIK4 and GRIK5. As to quaternary structure, homomeric GluR7B forms functional kainate receptors. In terms of processing, mass spectrometry data suggest the protein is N-glycosylated at five distinct sites. In terms of tissue distribution, expressed in the olfactory bulb (at protein level). Expressed in the deep cortical layers, dentate gyrus, reticular thalamic nucleus, mammillary bodies, pons, and cerebellum of the adult.

The protein resides in the cell membrane. Its subcellular location is the postsynaptic cell membrane. The enzyme catalyses Ca(2+)(in) = Ca(2+)(out). Functionally, ionotropic glutamate receptor that functions as a cation-permeable ligand-gated ion channel, gated by L-glutamate and the glutamatergic agonist kainic acid. Binding of the excitatory neurotransmitter L-glutamate induces a conformation change, leading to the opening of the cation channel, and thereby converts the chemical signal to an electrical impulse. The receptor then desensitizes rapidly and enters a transient inactive state, characterized by the presence of bound agonist. In association with GRIK2, involved in presynaptic facilitation of glutamate release at hippocampal mossy fiber synapses. In terms of biological role, ionotropic glutamate receptor that functions as a ligand-gated cation channel, gated by L-glutamate and the glutamatergic agonist kainic acid. This chain is Glutamate receptor ionotropic, kainate 3 (Grik3), found in Rattus norvegicus (Rat).